A 151-amino-acid polypeptide reads, in one-letter code: Cytochrome c-type biogenesis protein CcmE (151 aa).

The Cytoplasmic segment spans residues methionine 1–arginine 8. A helical; Signal-anchor for type II membrane protein transmembrane segment spans residues leucine 9–alanine 29. Topologically, residues leucine 30–glycine 151 are periplasmic. The heme site is built by histidine 124 and tyrosine 128.

This sequence belongs to the CcmE/CycJ family.

It localises to the cell inner membrane. In terms of biological role, heme chaperone required for the biogenesis of c-type cytochromes. Transiently binds heme delivered by CcmC and transfers the heme to apo-cytochromes in a process facilitated by CcmF and CcmH. In Pseudomonas fluorescens (strain SBW25), this protein is Cytochrome c-type biogenesis protein CcmE.